We begin with the raw amino-acid sequence, 104 residues long: uncharacterized protein (104 aa).

Positions 1–24 (MISTEKSSDAVAMHCPSGDQHNSE) are disordered.

This is an uncharacterized protein from Saccharomyces cerevisiae (strain ATCC 204508 / S288c) (Baker's yeast).